Consider the following 360-residue polypeptide: Dual-specificity RNA methyltransferase RlmN (360 aa).

Glutamate 91 (proton acceptor) is an active-site residue. Positions arginine 110–aspartate 343 constitute a Radical SAM core domain. Residues cysteine 117 and cysteine 348 are joined by a disulfide bond. Residues cysteine 124, cysteine 128, and cysteine 131 each contribute to the [4Fe-4S] cluster site. S-adenosyl-L-methionine contacts are provided by residues glycine 174–glutamate 175, serine 206, serine 229–histidine 231, and asparagine 305. Residue cysteine 348 is the S-methylcysteine intermediate of the active site.

Belongs to the radical SAM superfamily. RlmN family. The cofactor is [4Fe-4S] cluster.

The protein resides in the cytoplasm. The enzyme catalyses adenosine(2503) in 23S rRNA + 2 reduced [2Fe-2S]-[ferredoxin] + 2 S-adenosyl-L-methionine = 2-methyladenosine(2503) in 23S rRNA + 5'-deoxyadenosine + L-methionine + 2 oxidized [2Fe-2S]-[ferredoxin] + S-adenosyl-L-homocysteine. It carries out the reaction adenosine(37) in tRNA + 2 reduced [2Fe-2S]-[ferredoxin] + 2 S-adenosyl-L-methionine = 2-methyladenosine(37) in tRNA + 5'-deoxyadenosine + L-methionine + 2 oxidized [2Fe-2S]-[ferredoxin] + S-adenosyl-L-homocysteine. Specifically methylates position 2 of adenine 2503 in 23S rRNA and position 2 of adenine 37 in tRNAs. m2A2503 modification seems to play a crucial role in the proofreading step occurring at the peptidyl transferase center and thus would serve to optimize ribosomal fidelity. The protein is Dual-specificity RNA methyltransferase RlmN of Aliarcobacter butzleri (strain RM4018) (Arcobacter butzleri).